The following is a 218-amino-acid chain: Methylthioribulose-1-phosphate dehydratase (218 aa).

Residues H107 and H109 each coordinate Zn(2+).

The protein belongs to the aldolase class II family. MtnB subfamily. It depends on Zn(2+) as a cofactor.

It carries out the reaction 5-(methylsulfanyl)-D-ribulose 1-phosphate = 5-methylsulfanyl-2,3-dioxopentyl phosphate + H2O. It functions in the pathway amino-acid biosynthesis; L-methionine biosynthesis via salvage pathway; L-methionine from S-methyl-5-thio-alpha-D-ribose 1-phosphate: step 2/6. Functionally, catalyzes the dehydration of methylthioribulose-1-phosphate (MTRu-1-P) into 2,3-diketo-5-methylthiopentyl-1-phosphate (DK-MTP-1-P). The polypeptide is Methylthioribulose-1-phosphate dehydratase (Xylella fastidiosa (strain M12)).